We begin with the raw amino-acid sequence, 215 residues long: Small ribosomal subunit protein eS1 (215 aa).

The protein belongs to the eukaryotic ribosomal protein eS1 family.

This Halorubrum lacusprofundi (strain ATCC 49239 / DSM 5036 / JCM 8891 / ACAM 34) protein is Small ribosomal subunit protein eS1.